Reading from the N-terminus, the 152-residue chain is Nuclear cap-binding protein subunit 2 (152 aa).

MRNA contacts are provided by residues Tyr8, Tyr31, 100–104 (RTDWD), 111–115 (RQFGR), and 121–122 (QV). An RRM domain is found at 28 to 106 (TTLYVGNMSF…RIIRTDWDAG (79 aa)).

It belongs to the RRM NCBP2 family. Component of the nuclear cap-binding complex (CBC), a heterodimer composed of Cbp80 and Cbp20 that interacts with m7GpppG-capped RNA.

It is found in the nucleus. Functionally, component of the cap-binding complex (CBC), which binds co-transcriptionally to the 5' cap of pre-mRNAs and is involved in various processes such as pre-mRNA splicing and RNA-mediated gene silencing (RNAi). The CBC complex is involved in miRNA-mediated RNA interference and is required for primary microRNAs (miRNAs) processing. Also involved in innate immunity via the short interfering RNAs (siRNAs) processing machinery by restricting the viral RNA production. In the CBC complex, Cbp20 recognizes and binds capped RNAs (m7GpppG-capped RNA) but requires Cbp80 to stabilize the movement of its N-terminal loop and lock the CBC into a high affinity cap-binding state with the cap structure. The sequence is that of Nuclear cap-binding protein subunit 2 (Cbp20) from Ixodes scapularis (Black-legged tick).